We begin with the raw amino-acid sequence, 345 residues long: Tetraacyldisaccharide 4'-kinase (345 aa).

54–61 (TLGGAGKT) is a binding site for ATP.

Belongs to the LpxK family.

The catalysed reaction is a lipid A disaccharide + ATP = a lipid IVA + ADP + H(+). Its pathway is glycolipid biosynthesis; lipid IV(A) biosynthesis; lipid IV(A) from (3R)-3-hydroxytetradecanoyl-[acyl-carrier-protein] and UDP-N-acetyl-alpha-D-glucosamine: step 6/6. Transfers the gamma-phosphate of ATP to the 4'-position of a tetraacyldisaccharide 1-phosphate intermediate (termed DS-1-P) to form tetraacyldisaccharide 1,4'-bis-phosphate (lipid IVA). The polypeptide is Tetraacyldisaccharide 4'-kinase (Allorhizobium ampelinum (strain ATCC BAA-846 / DSM 112012 / S4) (Agrobacterium vitis (strain S4))).